A 150-amino-acid polypeptide reads, in one-letter code: Non-structural protein (150 aa).

The interval 93–140 is apoptotic activity; that stretch reads PLFRIRFLLLIMSDSISLTDITISPGTLYSARTLLLRAAVLALTRKPM.

Functionally, disrupts the host mitochondrial membrane potential and induces apoptosis probably by inducing host CASP8 and CASP9. This Bos taurus (Bovine) protein is Non-structural protein.